Reading from the N-terminus, the 247-residue chain is 1-(5-phosphoribosyl)-5-[(5-phosphoribosylamino)methylideneamino] imidazole-4-carboxamide isomerase 2 (247 aa).

Catalysis depends on E8, which acts as the Proton acceptor. Residue D128 is the Proton donor of the active site.

It belongs to the HisA/HisF family.

It localises to the cytoplasm. It catalyses the reaction 1-(5-phospho-beta-D-ribosyl)-5-[(5-phospho-beta-D-ribosylamino)methylideneamino]imidazole-4-carboxamide = 5-[(5-phospho-1-deoxy-D-ribulos-1-ylimino)methylamino]-1-(5-phospho-beta-D-ribosyl)imidazole-4-carboxamide. The protein operates within amino-acid biosynthesis; L-histidine biosynthesis; L-histidine from 5-phospho-alpha-D-ribose 1-diphosphate: step 4/9. This is 1-(5-phosphoribosyl)-5-[(5-phosphoribosylamino)methylideneamino] imidazole-4-carboxamide isomerase 2 from Ruegeria pomeroyi (strain ATCC 700808 / DSM 15171 / DSS-3) (Silicibacter pomeroyi).